The sequence spans 469 residues: 2-oxoisovalerate dehydrogenase subunit beta, mitochondrial (469 aa).

Residues M1–Y40 constitute a mitochondrion transit peptide. Residue Y167 coordinates thiamine diphosphate. Residues G194, L196, and T197 each coordinate K(+).

Heterotetramer of 2 alpha and 2 beta chains. Thiamine diphosphate serves as cofactor.

Its subcellular location is the mitochondrion matrix. The enzyme catalyses N(6)-[(R)-lipoyl]-L-lysyl-[protein] + 3-methyl-2-oxobutanoate + H(+) = N(6)-[(R)-S(8)-2-methylpropanoyldihydrolipoyl]-L-lysyl-[protein] + CO2. Its function is as follows. The branched-chain alpha-keto dehydrogenase complex catalyzes the overall conversion of alpha-keto acids to acyl-CoA and CO(2). It contains multiple copies of three enzymatic components: branched-chain alpha-keto acid decarboxylase (E1), lipoamide acyltransferase (E2) and lipoamide dehydrogenase (E3). The protein is 2-oxoisovalerate dehydrogenase subunit beta, mitochondrial of Chaetomium thermophilum (strain DSM 1495 / CBS 144.50 / IMI 039719) (Thermochaetoides thermophila).